Here is a 65-residue protein sequence, read N- to C-terminus: Conotoxin tx3c (65 aa).

The signal sequence occupies residues 1-19 (MFKLGVLLTICLLLFSLNA). A propeptide spanning residues 20–50 (VPLDGDQPADQPAERLLDDISFENNPFYDPA) is cleaved from the precursor. 3 disulfide bridges follow: Cys-53-Cys-64, Cys-54-Cys-60, and Cys-57-Cys-63. Pro-62 carries the post-translational modification 4-hydroxyproline; partial. Cysteine amide is present on Cys-64.

In terms of processing, the hydroxylation at Pro-62 is observed in PubMed:15924437, PubMed:19380747 and PubMed:22709442, and the non-hydroxylation is described in PubMed:22709442. Expressed by the venom duct.

It is found in the secreted. In terms of biological role, causes scratching in mice. In Conus textile (Cloth-of-gold cone), this protein is Conotoxin tx3c.